The primary structure comprises 98 residues: Large ribosomal subunit protein bL28 (98 aa).

The protein belongs to the bacterial ribosomal protein bL28 family.

This chain is Large ribosomal subunit protein bL28, found in Thermus thermophilus (strain ATCC BAA-163 / DSM 7039 / HB27).